Here is a 1212-residue protein sequence, read N- to C-terminus: DNA topoisomerase 1 (1212 aa).

The 114-residue stretch at Met-1 to Ile-114 folds into the Toprim domain. Mg(2+) is bound by residues Glu-7 and Asp-80. Positions Asp-130–Thr-556 constitute a Topo IA-type catalytic domain. The segment at Ser-164 to Gln-169 is interaction with DNA. Tyr-293 serves as the catalytic O-(5'-phospho-DNA)-tyrosine intermediate. The C4-type zinc finger occupies Cys-592–Cys-619. 3 disordered regions span residues Gly-687–Thr-742, Ala-758–Ala-937, and Arg-1107–Glu-1212. Composition is skewed to polar residues over residues Ala-708–Thr-742 and Val-770–Ile-782. The span at Ala-815–Ser-840 shows a compositional bias: basic and acidic residues. Polar residues-rich tracts occupy residues Ala-881–Asp-890 and Ser-897–Val-906. The span at Lys-921–Lys-934 shows a compositional bias: basic and acidic residues. The segment covering Lys-1109–Thr-1140 has biased composition (basic residues). The segment covering Thr-1141–Thr-1151 has biased composition (low complexity). Residues Pro-1167–Ala-1182 are compositionally biased toward basic residues. Positions Ser-1183 to Lys-1199 are enriched in low complexity.

Belongs to the type IA topoisomerase family. In terms of assembly, monomer. Requires Mg(2+) as cofactor.

The catalysed reaction is ATP-independent breakage of single-stranded DNA, followed by passage and rejoining.. Releases the supercoiling and torsional tension of DNA, which is introduced during the DNA replication and transcription, by transiently cleaving and rejoining one strand of the DNA duplex. Introduces a single-strand break via transesterification at a target site in duplex DNA. The scissile phosphodiester is attacked by the catalytic tyrosine of the enzyme, resulting in the formation of a DNA-(5'-phosphotyrosyl)-enzyme intermediate and the expulsion of a 3'-OH DNA strand. The free DNA strand then undergoes passage around the unbroken strand, thus removing DNA supercoils. Finally, in the religation step, the DNA 3'-OH attacks the covalent intermediate to expel the active-site tyrosine and restore the DNA phosphodiester backbone. The chain is DNA topoisomerase 1 from Zymomonas mobilis subsp. mobilis (strain ATCC 31821 / ZM4 / CP4).